We begin with the raw amino-acid sequence, 420 residues long: CinA-like protein (420 aa).

The protein belongs to the CinA family.

This chain is CinA-like protein, found in Geotalea uraniireducens (strain Rf4) (Geobacter uraniireducens).